The following is a 22-amino-acid chain: 2.39 kDa venom peptide (22 aa).

In terms of processing, contains 2 disulfide bonds. Expressed by the venom gland.

Its subcellular location is the secreted. Its function is as follows. Not lethal to mice by intraperitoneal or intracerebroventricular injections in doses up to 100 micrograms. The protein is 2.39 kDa venom peptide of Heterometrus spinifer (Asia giant forest scorpion).